The chain runs to 197 residues: Holliday junction branch migration complex subunit RuvA (197 aa).

Positions 1 to 61 (MYEYFEGTIT…ENGMTLYGFK (61 aa)) are domain I. Residues 62–140 (SQQDKVLFNK…NYVAENLFTE (79 aa)) form a domain II region. The tract at residues 141-150 (DEPVESVFPA) is flexible linker. Residues 150 to 197 (ALEDALLALGALGYSQKEVDRIKPKLKKLPEMSADEYIKQGLGFLLKK) are domain III.

It belongs to the RuvA family. In terms of assembly, homotetramer. Forms an RuvA(8)-RuvB(12)-Holliday junction (HJ) complex. HJ DNA is sandwiched between 2 RuvA tetramers; dsDNA enters through RuvA and exits via RuvB. An RuvB hexamer assembles on each DNA strand where it exits the tetramer. Each RuvB hexamer is contacted by two RuvA subunits (via domain III) on 2 adjacent RuvB subunits; this complex drives branch migration. In the full resolvosome a probable DNA-RuvA(4)-RuvB(12)-RuvC(2) complex forms which resolves the HJ.

It is found in the cytoplasm. In terms of biological role, the RuvA-RuvB-RuvC complex processes Holliday junction (HJ) DNA during genetic recombination and DNA repair, while the RuvA-RuvB complex plays an important role in the rescue of blocked DNA replication forks via replication fork reversal (RFR). RuvA specifically binds to HJ cruciform DNA, conferring on it an open structure. The RuvB hexamer acts as an ATP-dependent pump, pulling dsDNA into and through the RuvAB complex. HJ branch migration allows RuvC to scan DNA until it finds its consensus sequence, where it cleaves and resolves the cruciform DNA. The polypeptide is Holliday junction branch migration complex subunit RuvA (Lactobacillus delbrueckii subsp. bulgaricus (strain ATCC BAA-365 / Lb-18)).